Reading from the N-terminus, the 269-residue chain is 4-hydroxy-tetrahydrodipicolinate reductase (269 aa).

Residues 8-13 and E34 contribute to the NAD(+) site; that span reads GAAGRM. R35 lines the NADP(+) pocket. NAD(+) is bound by residues 98–100 and 122–125; these read GTT and APNY. The Proton donor/acceptor role is filled by H155. (S)-2,3,4,5-tetrahydrodipicolinate is bound at residue H156. The active-site Proton donor is the K159. 165–166 provides a ligand contact to (S)-2,3,4,5-tetrahydrodipicolinate; that stretch reads GT.

The protein belongs to the DapB family.

The protein resides in the cytoplasm. The catalysed reaction is (S)-2,3,4,5-tetrahydrodipicolinate + NAD(+) + H2O = (2S,4S)-4-hydroxy-2,3,4,5-tetrahydrodipicolinate + NADH + H(+). It carries out the reaction (S)-2,3,4,5-tetrahydrodipicolinate + NADP(+) + H2O = (2S,4S)-4-hydroxy-2,3,4,5-tetrahydrodipicolinate + NADPH + H(+). The protein operates within amino-acid biosynthesis; L-lysine biosynthesis via DAP pathway; (S)-tetrahydrodipicolinate from L-aspartate: step 4/4. Functionally, catalyzes the conversion of 4-hydroxy-tetrahydrodipicolinate (HTPA) to tetrahydrodipicolinate. This Vibrio atlanticus (strain LGP32) (Vibrio splendidus (strain Mel32)) protein is 4-hydroxy-tetrahydrodipicolinate reductase.